The chain runs to 91 residues: Small ribosomal subunit protein uS15 (91 aa).

The protein belongs to the universal ribosomal protein uS15 family. Part of the 30S ribosomal subunit. Forms a bridge to the 50S subunit in the 70S ribosome, contacting the 23S rRNA.

In terms of biological role, one of the primary rRNA binding proteins, it binds directly to 16S rRNA where it helps nucleate assembly of the platform of the 30S subunit by binding and bridging several RNA helices of the 16S rRNA. Its function is as follows. Forms an intersubunit bridge (bridge B4) with the 23S rRNA of the 50S subunit in the ribosome. In Rickettsia akari (strain Hartford), this protein is Small ribosomal subunit protein uS15.